Consider the following 481-residue polypeptide: Argininosuccinate lyase (481 aa).

It belongs to the lyase 1 family. Argininosuccinate lyase subfamily.

It is found in the cytoplasm. It carries out the reaction 2-(N(omega)-L-arginino)succinate = fumarate + L-arginine. The protein operates within amino-acid biosynthesis; L-arginine biosynthesis; L-arginine from L-ornithine and carbamoyl phosphate: step 3/3. The protein is Argininosuccinate lyase of Methanococcus maripaludis (strain DSM 14266 / JCM 13030 / NBRC 101832 / S2 / LL).